Here is a 287-residue protein sequence, read N- to C-terminus: NAD-dependent protein deacylase sir-2.3 (287 aa).

Residues 10-287 enclose the Deacetylase sirtuin-type domain; it reads TELCENSLKK…YRISDVLKEM (278 aa). NAD(+)-binding positions include 35–55 and 116–119; these read GAGISTESGIPDYRSKDVGLY and QNVD. His134 serves as the catalytic Proton acceptor. Zn(2+)-binding residues include Cys142, Cys145, Cys196, and Cys199. NAD(+)-binding positions include 236–238, 262–264, and Ile280; these read GTS and NIG.

It belongs to the sirtuin family. Class II subfamily. As to quaternary structure, interacts with pyc-1, pcca-1 and mccc-1. It depends on Zn(2+) as a cofactor. Ubiquitously expressed with high expression in the pharynx, body wall muscles and gonad. Strong expression in a subset of non-neuronal cells in the head.

Its subcellular location is the mitochondrion matrix. It is found in the mitochondrion. The enzyme catalyses N(6)-acetyl-L-lysyl-[protein] + NAD(+) + H2O = 2''-O-acetyl-ADP-D-ribose + nicotinamide + L-lysyl-[protein]. Its function is as follows. NAD-dependent protein deacylase. Catalyzes the NAD-dependent hydrolysis of acyl groups from lysine residues. Plays a role in oxidative stress resistance. Might promote neuronal cell death under ischemic conditions and cell death in touch neurons induced by mec-4 channel hyperactivation, possibly downstream of the insulin-like receptor daf-2. Might attenuate the reactive oxygen species (ROS) scavenging system, that eliminates ROS in ischemic conditions, under dietary deprivation and when glycolysis is blocked. The chain is NAD-dependent protein deacylase sir-2.3 (sir-2.3) from Caenorhabditis elegans.